The chain runs to 308 residues: tRNA pseudouridine synthase B (308 aa).

Aspartate 46 functions as the Nucleophile in the catalytic mechanism.

It belongs to the pseudouridine synthase TruB family. Type 1 subfamily.

It carries out the reaction uridine(55) in tRNA = pseudouridine(55) in tRNA. In terms of biological role, responsible for synthesis of pseudouridine from uracil-55 in the psi GC loop of transfer RNAs. This is tRNA pseudouridine synthase B from Marinomonas sp. (strain MWYL1).